The primary structure comprises 112 residues: Signal recognition particle 19 kDa protein (112 aa).

Belongs to the SRP19 family. As to quaternary structure, part of the signal recognition particle protein translocation system, which is composed of SRP and FtsY. Archaeal SRP consists of a 7S RNA molecule of 300 nucleotides and two protein subunits: SRP54 and SRP19.

The protein resides in the cytoplasm. Its function is as follows. Involved in targeting and insertion of nascent membrane proteins into the cytoplasmic membrane. Binds directly to 7S RNA and mediates binding of the 54 kDa subunit of the SRP. The chain is Signal recognition particle 19 kDa protein from Aeropyrum pernix (strain ATCC 700893 / DSM 11879 / JCM 9820 / NBRC 100138 / K1).